Consider the following 460-residue polypeptide: ESX-1 secretion-associated protein EspB (460 aa).

3 disordered regions span residues L92–L116, P303–T335, and L405–R441.

In terms of processing, cleaved in the C-terminal region by MycP1.

It localises to the secreted. This chain is ESX-1 secretion-associated protein EspB, found in Mycobacterium tuberculosis (strain CDC 1551 / Oshkosh).